We begin with the raw amino-acid sequence, 297 residues long: 2-dehydropantoate 2-reductase (297 aa).

Residues 11–16 (GAGAMG), Asn-107, and Ala-133 contribute to the NADP(+) site. Asn-107 lines the substrate pocket. Lys-187 (proton donor) is an active-site residue. Positions 191, 195, 205, and 251 each coordinate substrate. NADP(+) is bound at residue Glu-263.

Belongs to the ketopantoate reductase family.

It localises to the cytoplasm. It carries out the reaction (R)-pantoate + NADP(+) = 2-dehydropantoate + NADPH + H(+). It participates in cofactor biosynthesis; (R)-pantothenate biosynthesis; (R)-pantoate from 3-methyl-2-oxobutanoate: step 2/2. Functionally, catalyzes the NADPH-dependent reduction of ketopantoate into pantoic acid. This is 2-dehydropantoate 2-reductase from Listeria monocytogenes serovar 1/2a (strain ATCC BAA-679 / EGD-e).